Reading from the N-terminus, the 210-residue chain is MQVKNPILGLCQKATFALSAAKVEQCPEDQGYEVAFAGRSNAGKSSALNTLTHASLARTSKTPGRTQLLNFFSLDDERRLVDLPGYGYAKVPIPLKQHWQKHLEAYLGSRECLRGVILMMDVRHPMTDFDKMMLDWARASGMPMHILLTKADKLTHGAGKNTLLKVQSEIRKGWGDSTTIQLFSAPKRLGLEEAYRVLADWMELEDKPVA.

Residues 30–204 form the EngB-type G domain; sequence QGYEVAFAGR…YRVLADWMEL (175 aa). Residues 38–45, 64–68, 82–85, 149–152, and 182–185 each bind GTP; these read GRSNAGKS, GRTQL, DLPG, TKAD, and LFSA. Residues Ser45 and Thr66 each coordinate Mg(2+).

This sequence belongs to the TRAFAC class TrmE-Era-EngA-EngB-Septin-like GTPase superfamily. EngB GTPase family. It depends on Mg(2+) as a cofactor.

Functionally, necessary for normal cell division and for the maintenance of normal septation. In Pseudomonas entomophila (strain L48), this protein is Probable GTP-binding protein EngB.